A 477-amino-acid chain; its full sequence is NADH-quinone oxidoreductase subunit N (477 aa).

The next 13 membrane-spanning stretches (helical) occupy residues 7–27 (VLAH…LILI), 37–57 (GPMT…LVLG), 77–97 (FMKV…QTYL), 109–129 (ILIL…GLIA), 162–182 (FVLG…IYGF), 201–221 (LGVV…MSTV), 233–253 (GAPT…AIAI), 272–292 (IIVF…IGQT), 297–317 (LMAY…AAGT), 323–343 (GVLA…AAIL), 369–389 (AFFL…AGFF), 402–424 (HLYP…YLRI), and 446–466 (AVLI…GSFV).

The protein belongs to the complex I subunit 2 family. NDH-1 is composed of 14 different subunits. Subunits NuoA, H, J, K, L, M, N constitute the membrane sector of the complex.

It localises to the cell inner membrane. The catalysed reaction is a quinone + NADH + 5 H(+)(in) = a quinol + NAD(+) + 4 H(+)(out). Functionally, NDH-1 shuttles electrons from NADH, via FMN and iron-sulfur (Fe-S) centers, to quinones in the respiratory chain. The immediate electron acceptor for the enzyme in this species is believed to be ubiquinone. Couples the redox reaction to proton translocation (for every two electrons transferred, four hydrogen ions are translocated across the cytoplasmic membrane), and thus conserves the redox energy in a proton gradient. In Beijerinckia indica subsp. indica (strain ATCC 9039 / DSM 1715 / NCIMB 8712), this protein is NADH-quinone oxidoreductase subunit N.